Here is a 201-residue protein sequence, read N- to C-terminus: TDSEPGAVILGFKASMTDVYAFPMTIGVRAHEPSDVMSKVRALEPSDMSKRAVAGMKEFYVRAEGIHGTDKSPVITARMKPVHSIGSVRAHFIDGKPTPIKVRAFGPITESMLDEHSMTIGRYEVIASRKYPSDYRHVFGMETSALDRVYAIKGEHRAFSDVSPTHATIEMESPAAHDFLYGRAKVDEPMTIRVAFHSTCM.

This is one of six apparently different protein chains that constitute the peanut protein arachin.

The chain is Arachin 25 kDa protein from Arachis hypogaea (Peanut).